The following is an 885-amino-acid chain: Dual serine/threonine and tyrosine protein kinase (885 aa).

In terms of domain architecture, Protein kinase spans 614-868 (PKLGRELGRG…PLLGIVQPGL (255 aa)). ATP contacts are provided by residues 620–628 (LGRGQYGVV) and Lys-643. The active-site Proton acceptor is Asp-739.

It belongs to the protein kinase superfamily. Ser/Thr protein kinase family.

The protein localises to the cytoplasm. It is found in the cell membrane. Its subcellular location is the apical cell membrane. The protein resides in the basolateral cell membrane. It localises to the cell junction. It carries out the reaction L-seryl-[protein] + ATP = O-phospho-L-seryl-[protein] + ADP + H(+). The catalysed reaction is L-threonyl-[protein] + ATP = O-phospho-L-threonyl-[protein] + ADP + H(+). The enzyme catalyses L-tyrosyl-[protein] + ATP = O-phospho-L-tyrosyl-[protein] + ADP + H(+). In terms of biological role, may act as a positive regulator of ERK phosphorylation downstream of fibroblast growth factor-receptor activation. May induce both caspase-dependent apoptosis and caspase-independent cell death. Plays a role in the embryonic development. The protein is Dual serine/threonine and tyrosine protein kinase (dstyk) of Danio rerio (Zebrafish).